Consider the following 151-residue polypeptide: Ribonuclease H (151 aa).

The RNase H type-1 domain occupies 1–143; that stretch reads MYKKIEIFTD…CDQLARLAAK (143 aa). Mg(2+) contacts are provided by D10, E48, D70, and D135.

It belongs to the RNase H family. As to quaternary structure, monomer. Mg(2+) is required as a cofactor.

The protein localises to the cytoplasm. The enzyme catalyses Endonucleolytic cleavage to 5'-phosphomonoester.. Its function is as follows. Endonuclease that specifically degrades the RNA of RNA-DNA hybrids. The protein is Ribonuclease H of Blochmanniella pennsylvanica (strain BPEN).